Reading from the N-terminus, the 294-residue chain is Glucosamine kinase GspK (294 aa).

An ATP-binding site is contributed by T12. D101 is a substrate binding site. Position 122 (T122) interacts with ATP. Residues 139–141 (GRE) and D146 each bind substrate. G202 lines the ATP pocket.

Belongs to the eukaryotic-type N-acetylglucosamine kinase family.

It is found in the cytoplasm. It catalyses the reaction D-glucosamine + ATP = D-glucosamine 6-phosphate + ADP + H(+). In terms of biological role, ATP-dependent kinase, which is specific for glucosamine. Does not show kinase activity with any other sugar. The protein is Glucosamine kinase GspK (gspK) of Vibrio cholerae serotype O1 (strain ATCC 39315 / El Tor Inaba N16961).